The following is a 31-amino-acid chain: Photosystem I reaction center subunit XII (31 aa).

Residues 7–26 form a helical membrane-spanning segment; the sequence is QVYVALVIALLPAVLAFRLS.

This sequence belongs to the PsaM family.

The protein localises to the cellular thylakoid membrane. The polypeptide is Photosystem I reaction center subunit XII (Thermosynechococcus vestitus (strain NIES-2133 / IAM M-273 / BP-1)).